Here is a 506-residue protein sequence, read N- to C-terminus: Alpha-ketoglutarate-dependent dioxygenase FTO (506 aa).

Phosphothreonine is present on Thr-4. A fe2OG dioxygenase domain region spans residues 32–326 (TPKDDEFYQQ…SSTHRVAECS (295 aa)). Substrate-binding residues include Arg-96 and Tyr-108. Asn-204 contributes to the 2-oxoglutarate binding site. A loop L1; predicted to block binding of double-stranded DNA or RNA region spans residues 212–223 (PYLKEEPYFGMG). An N6-acetyllysine modification is found at Lys-215. Fe cation is bound by residues His-230 and Asp-232. 230–233 (HHDE) serves as a coordination point for substrate. 2-oxoglutarate is bound at residue Tyr-294. His-306 serves as a coordination point for Fe cation. 2-oxoglutarate-binding positions include 315-317 (RFS), Thr-319, and Arg-321.

Belongs to the fto family. In terms of assembly, monomer. May also exist as homodimer. The cofactor is Fe(2+).

It is found in the nucleus. The protein resides in the nucleus speckle. It localises to the cytoplasm. It carries out the reaction a 5'-end (N(7)-methyl 5'-triphosphoguanosine)-(N(6),2'-O-dimethyladenosine) in mRNA + 2-oxoglutarate + O2 = a 5'-end (N(7)-methyl 5'-triphosphoguanosine)-(2'-O-methyladenosine) in mRNA + formaldehyde + succinate + CO2. The enzyme catalyses an N(6)-methyladenosine in mRNA + 2-oxoglutarate + O2 = an adenosine in mRNA + formaldehyde + succinate + CO2. The catalysed reaction is N(6)-methyladenosine in U6 snRNA + 2-oxoglutarate + O2 = adenosine in U6 snRNA + formaldehyde + succinate + CO2. It catalyses the reaction a 5'-end (N(7)-methyl 5'-triphosphoguanosine)-(N(6),2'-O-dimethyladenosine) in U6 snRNA + 2-oxoglutarate + O2 = a 5'-end (N(7)-methyl 5'-triphosphoguanosine)-(2'-O-methyladenosine) in U6 snRNA + formaldehyde + succinate + CO2. It carries out the reaction an N(1)-methyladenosine in tRNA + 2-oxoglutarate + O2 = an adenosine in tRNA + formaldehyde + succinate + CO2. Functionally, RNA demethylase that mediates oxidative demethylation of different RNA species, such as mRNAs, tRNAs and snRNAs, and acts as a regulator of fat mass, adipogenesis and energy homeostasis. Specifically demethylates N(6)-methyladenosine (m6A) RNA, the most prevalent internal modification of messenger RNA (mRNA) in higher eukaryotes. M6A demethylation by FTO affects mRNA expression and stability. Also able to demethylate m6A in U6 small nuclear RNA (snRNA). Mediates demethylation of N(6),2'-O-dimethyladenosine cap (m6A(m)), by demethylating the N(6)-methyladenosine at the second transcribed position of mRNAs and U6 snRNA. Demethylation of m6A(m) in the 5'-cap by FTO affects mRNA stability by promoting susceptibility to decapping. Also acts as a tRNA demethylase by removing N(1)-methyladenine from various tRNAs. Has no activity towards 1-methylguanine. Has no detectable activity towards double-stranded DNA. Also able to repair alkylated DNA and RNA by oxidative demethylation: demethylates single-stranded RNA containing 3-methyluracil, single-stranded DNA containing 3-methylthymine and has low demethylase activity towards single-stranded DNA containing 1-methyladenine or 3-methylcytosine. Ability to repair alkylated DNA and RNA is however unsure in vivo. Involved in the regulation of fat mass, adipogenesis and body weight, thereby contributing to the regulation of body size and body fat accumulation. Involved in the regulation of thermogenesis and the control of adipocyte differentiation into brown or white fat cells. Regulates activity of the dopaminergic midbrain circuitry via its ability to demethylate m6A in mRNAs. Plays an oncogenic role in a number of acute myeloid leukemias by enhancing leukemic oncogene-mediated cell transformation: acts by mediating m6A demethylation of target transcripts such as MYC, CEBPA, ASB2 and RARA, leading to promote their expression. The polypeptide is Alpha-ketoglutarate-dependent dioxygenase FTO (FTO) (Canis lupus familiaris (Dog)).